We begin with the raw amino-acid sequence, 521 residues long: Bifunctional purine biosynthesis protein PurH (521 aa).

Residues 1–145 enclose the MGS-like domain; it reads MIKQALISVS…KNHRDVTVVV (145 aa).

It belongs to the PurH family.

The enzyme catalyses (6R)-10-formyltetrahydrofolate + 5-amino-1-(5-phospho-beta-D-ribosyl)imidazole-4-carboxamide = 5-formamido-1-(5-phospho-D-ribosyl)imidazole-4-carboxamide + (6S)-5,6,7,8-tetrahydrofolate. It catalyses the reaction IMP + H2O = 5-formamido-1-(5-phospho-D-ribosyl)imidazole-4-carboxamide. It functions in the pathway purine metabolism; IMP biosynthesis via de novo pathway; 5-formamido-1-(5-phospho-D-ribosyl)imidazole-4-carboxamide from 5-amino-1-(5-phospho-D-ribosyl)imidazole-4-carboxamide (10-formyl THF route): step 1/1. Its pathway is purine metabolism; IMP biosynthesis via de novo pathway; IMP from 5-formamido-1-(5-phospho-D-ribosyl)imidazole-4-carboxamide: step 1/1. The protein is Bifunctional purine biosynthesis protein PurH of Burkholderia ambifaria (strain MC40-6).